The sequence spans 144 residues: Large ribosomal subunit protein uL16 (144 aa).

A compositionally biased stretch (basic residues) spans 1–16; it reads MLVPKRVKHRKVQRGK. The disordered stretch occupies residues 1–20; sequence MLVPKRVKHRKVQRGKMRGE.

It belongs to the universal ribosomal protein uL16 family. In terms of assembly, part of the 50S ribosomal subunit.

Binds 23S rRNA and is also seen to make contacts with the A and possibly P site tRNAs. The chain is Large ribosomal subunit protein uL16 from Limosilactobacillus fermentum (strain NBRC 3956 / LMG 18251) (Lactobacillus fermentum).